A 215-amino-acid polypeptide reads, in one-letter code: uncharacterized protein (215 aa).

This is an uncharacterized protein from Ostreid herpesvirus 1 (isolate France) (OsHV-1).